The following is a 261-amino-acid chain: Cytochrome c oxidase subunit 3 (261 aa).

Residues Met-1 to Pro-15 are Mitochondrial matrix-facing. The chain crosses the membrane as a helical span at residues Trp-16 to Trp-34. Residues Phe-35 to Met-40 are Mitochondrial intermembrane-facing. The chain crosses the membrane as a helical span at residues Ile-41–Thr-66. The Mitochondrial matrix portion of the chain corresponds to Phe-67–Thr-72. Residues Leu-73–Ser-105 form a helical membrane-spanning segment. At Leu-106–Glu-128 the chain is on the mitochondrial intermembrane side. The helical transmembrane segment at Val-129–Met-152 threads the bilayer. Residues Glu-153–Gln-155 lie on the Mitochondrial matrix side of the membrane. A helical transmembrane segment spans residues Arg-156 to Glu-183. The Mitochondrial intermembrane segment spans residues Ser-184–Asp-190. Residues Gly-191 to Thr-223 form a helical membrane-spanning segment. The Mitochondrial matrix segment spans residues Gln-224–His-232. The helical transmembrane segment at Phe-233–Ile-256 threads the bilayer. Over Tyr-257–Ser-261 the chain is Mitochondrial intermembrane.

It belongs to the cytochrome c oxidase subunit 3 family. As to quaternary structure, component of the cytochrome c oxidase (complex IV, CIV), a multisubunit enzyme composed of 14 subunits. The complex is composed of a catalytic core of 3 subunits MT-CO1, MT-CO2 and MT-CO3, encoded in the mitochondrial DNA, and 11 supernumerary subunits COX4I, COX5A, COX5B, COX6A, COX6B, COX6C, COX7A, COX7B, COX7C, COX8 and NDUFA4, which are encoded in the nuclear genome. The complex exists as a monomer or a dimer and forms supercomplexes (SCs) in the inner mitochondrial membrane with NADH-ubiquinone oxidoreductase (complex I, CI) and ubiquinol-cytochrome c oxidoreductase (cytochrome b-c1 complex, complex III, CIII), resulting in different assemblies (supercomplex SCI(1)III(2)IV(1) and megacomplex MCI(2)III(2)IV(2)).

The protein resides in the mitochondrion inner membrane. The catalysed reaction is 4 Fe(II)-[cytochrome c] + O2 + 8 H(+)(in) = 4 Fe(III)-[cytochrome c] + 2 H2O + 4 H(+)(out). Functionally, component of the cytochrome c oxidase, the last enzyme in the mitochondrial electron transport chain which drives oxidative phosphorylation. The respiratory chain contains 3 multisubunit complexes succinate dehydrogenase (complex II, CII), ubiquinol-cytochrome c oxidoreductase (cytochrome b-c1 complex, complex III, CIII) and cytochrome c oxidase (complex IV, CIV), that cooperate to transfer electrons derived from NADH and succinate to molecular oxygen, creating an electrochemical gradient over the inner membrane that drives transmembrane transport and the ATP synthase. Cytochrome c oxidase is the component of the respiratory chain that catalyzes the reduction of oxygen to water. Electrons originating from reduced cytochrome c in the intermembrane space (IMS) are transferred via the dinuclear copper A center (CU(A)) of subunit 2 and heme A of subunit 1 to the active site in subunit 1, a binuclear center (BNC) formed by heme A3 and copper B (CU(B)). The BNC reduces molecular oxygen to 2 water molecules using 4 electrons from cytochrome c in the IMS and 4 protons from the mitochondrial matrix. The chain is Cytochrome c oxidase subunit 3 (MT-CO3) from Latimeria chalumnae (Coelacanth).